We begin with the raw amino-acid sequence, 800 residues long: Transducin beta-like protein 3 (800 aa).

Ala2 carries the post-translational modification N-acetylalanine. 13 WD repeats span residues 64–105, 107–146, 149–190, 193–232, 245–284, 290–329, 332–372, 374–413, 419–459, 477–516, 519–560, 562–602, and 604–642; these read EDQE…RLWK, IHTA…GTHH, GSPG…CLAV, AHYS…TSRT, LPEE…CVYT, GLRQ…LQKQ, GYSE…CQIL, GHTD…QVAC, GHTH…PSKN, CHDK…LLGV, GHRR…KTFE, HDAS…RTLD, and HEDK…EQAE. A Glycyl lysine isopeptide (Lys-Gly) (interchain with G-Cter in SUMO2) cross-link involves residue Lys407.

In terms of assembly, part of the small subunit (SSU) processome, composed of more than 70 proteins and the RNA chaperone small nucleolar RNA (snoRNA) U3.

Its subcellular location is the nucleus. The protein resides in the nucleolus. Functionally, part of the small subunit (SSU) processome, first precursor of the small eukaryotic ribosomal subunit. During the assembly of the SSU processome in the nucleolus, many ribosome biogenesis factors, an RNA chaperone and ribosomal proteins associate with the nascent pre-rRNA and work in concert to generate RNA folding, modifications, rearrangements and cleavage as well as targeted degradation of pre-ribosomal RNA by the RNA exosome. The protein is Transducin beta-like protein 3 (Tbl3) of Rattus norvegicus (Rat).